A 398-amino-acid polypeptide reads, in one-letter code: 1-deoxy-D-xylulose 5-phosphate reductoisomerase (398 aa).

Positions 10, 11, 12, 13, 36, 38, and 124 each coordinate NADPH. Position 125 (Lys125) interacts with 1-deoxy-D-xylulose 5-phosphate. Glu126 is an NADPH binding site. Position 150 (Asp150) interacts with Mn(2+). Residues Ser151, Glu152, Ser186, and His209 each coordinate 1-deoxy-D-xylulose 5-phosphate. Glu152 is a Mn(2+) binding site. Residue Gly215 participates in NADPH binding. 1-deoxy-D-xylulose 5-phosphate is bound by residues Ser222, Asn227, Lys228, and Glu231. Glu231 contacts Mn(2+).

Belongs to the DXR family. In terms of assembly, homodimer. The cofactor is Mg(2+). It depends on Mn(2+) as a cofactor.

The enzyme catalyses 2-C-methyl-D-erythritol 4-phosphate + NADP(+) = 1-deoxy-D-xylulose 5-phosphate + NADPH + H(+). It functions in the pathway isoprenoid biosynthesis; isopentenyl diphosphate biosynthesis via DXP pathway; isopentenyl diphosphate from 1-deoxy-D-xylulose 5-phosphate: step 1/6. Functionally, catalyzes the NADPH-dependent rearrangement and reduction of 1-deoxy-D-xylulose-5-phosphate (DXP) to 2-C-methyl-D-erythritol 4-phosphate (MEP). The sequence is that of 1-deoxy-D-xylulose 5-phosphate reductoisomerase from Pectobacterium atrosepticum (strain SCRI 1043 / ATCC BAA-672) (Erwinia carotovora subsp. atroseptica).